The primary structure comprises 523 residues: UDP-N-acetylmuramyl-tripeptide synthetase (523 aa).

Ser-38 lines the UDP-N-acetyl-alpha-D-muramoyl-L-alanyl-D-glutamate pocket. 116–122 (GTKGKTT) provides a ligand contact to ATP. Residues 162 to 163 (TT), Ser-189, and Arg-197 contribute to the UDP-N-acetyl-alpha-D-muramoyl-L-alanyl-D-glutamate site. Lys-231 is subject to N6-carboxylysine.

Belongs to the MurCDEF family. MurE subfamily. Carboxylation is probably crucial for Mg(2+) binding and, consequently, for the gamma-phosphate positioning of ATP.

It is found in the cytoplasm. It functions in the pathway cell wall biogenesis; peptidoglycan biosynthesis. Its function is as follows. Catalyzes the addition of an amino acid to the nucleotide precursor UDP-N-acetylmuramoyl-L-alanyl-D-glutamate (UMAG) in the biosynthesis of bacterial cell-wall peptidoglycan. This Lactobacillus acidophilus (strain ATCC 700396 / NCK56 / N2 / NCFM) protein is UDP-N-acetylmuramyl-tripeptide synthetase.